A 63-amino-acid polypeptide reads, in one-letter code: uncharacterized protein (63 aa).

The helical transmembrane segment at 3 to 23 (IIYIILGFLSLAIGIIGIFPS) threads the bilayer.

It localises to the membrane. This is an uncharacterized protein from Haemophilus influenzae (strain ATCC 51907 / DSM 11121 / KW20 / Rd).